The sequence spans 65 residues: Large ribosomal subunit protein bL35 (65 aa).

It belongs to the bacterial ribosomal protein bL35 family.

In Paraburkholderia xenovorans (strain LB400), this protein is Large ribosomal subunit protein bL35.